Here is a 1097-residue protein sequence, read N- to C-terminus: DNA-directed RNA polymerase subunit beta (1097 aa).

The tract at residues 1070–1097 (LMQDVNPRRNTPSRPTYESLGTSEYEED) is disordered. Polar residues predominate over residues 1077–1091 (RRNTPSRPTYESLGT).

Belongs to the RNA polymerase beta chain family. In cyanobacteria the RNAP catalytic core is composed of 2 alpha, 1 beta, 1 beta', 1 gamma and 1 omega subunit. When a sigma factor is associated with the core the holoenzyme is formed, which can initiate transcription.

The enzyme catalyses RNA(n) + a ribonucleoside 5'-triphosphate = RNA(n+1) + diphosphate. Its function is as follows. DNA-dependent RNA polymerase catalyzes the transcription of DNA into RNA using the four ribonucleoside triphosphates as substrates. The chain is DNA-directed RNA polymerase subunit beta from Prochlorococcus marinus (strain MIT 9515).